Consider the following 245-residue polypeptide: Membrane-spanning 4-domains subfamily A member 15 (245 aa).

Positions 1 to 30 are disordered; it reads MWERRGRGESAAGTAAVASRNASGLRPPPA. Helical transmembrane passes span 78–98, 103–123, 147–167, and 176–196; these read GTVQILIGLIHLGFGSVLLMV, LGMLFIEGGVPFWGGACFIIS, ILSAMAAFAGTAILLMDFGVT, and LAVLTIFTILEFFIAVIATHF.

Belongs to the MS4A family.

It is found in the membrane. Functionally, may be involved in signal transduction as a component of a multimeric receptor complex. This is Membrane-spanning 4-domains subfamily A member 15 (Ms4a15) from Mus musculus (Mouse).